We begin with the raw amino-acid sequence, 468 residues long: Probable Xaa-Pro aminopeptidase PEPP (468 aa).

Mn(2+) contacts are provided by Asp264, Asp275, Glu398, and Glu438.

Belongs to the peptidase M24B family. Mn(2+) serves as cofactor.

It catalyses the reaction Release of any N-terminal amino acid, including proline, that is linked to proline, even from a dipeptide or tripeptide.. Functionally, catalyzes the removal of a penultimate prolyl residue from the N-termini of peptides. This chain is Probable Xaa-Pro aminopeptidase PEPP (PEPP), found in Ajellomyces dermatitidis (strain ER-3 / ATCC MYA-2586) (Blastomyces dermatitidis).